Here is a 1190-residue protein sequence, read N- to C-terminus: PAN2-PAN3 deadenylation complex catalytic subunit PAN2 (1190 aa).

WD repeat units lie at residues 24-63, 129-166, 167-207, 222-264, 266-306, and 322-361; these read TTIVNITSLQFDSVQNFIWCGDSRGYTRSFTGSFATNSLY, NKFNNLQAMTFNCNSFNDVVVGTDTSMMKFDLNKPNVL, SSFD…TMKT, GNYI…AIAP, PFPA…NVYL, and NNKPRMSNLEISENGDFLVFNDNCDNMHLWSISPSSKDFV. The segment at 364–511 is linker; sequence PQPVEQPDII…FQYKFQGKLN (148 aa). The USP domain occupies 512-924; sequence KVPNCYSRLQ…KPIVIMYQQT (413 aa). The region spanning 988-1158 is the Exonuclease domain; sequence VAIDAEFVML…EDANTALLLY (171 aa). Residues Asp991, Glu993, Asp1097, and Asp1150 each contribute to the a divalent metal cation site.

This sequence belongs to the peptidase C19 family. PAN2 subfamily. Forms a heterotrimer with an asymmetric homodimer of the regulatory subunit PAN3 to form the poly(A)-nuclease (PAN) deadenylation complex. It depends on a divalent metal cation as a cofactor.

The protein localises to the cytoplasm. It catalyses the reaction Exonucleolytic cleavage of poly(A) to 5'-AMP.. With respect to regulation, positively regulated by the regulatory subunit PAN3. Its function is as follows. Catalytic subunit of the poly(A)-nuclease (PAN) deadenylation complex, one of two cytoplasmic mRNA deadenylases involved in mRNA turnover. PAN specifically shortens poly(A) tails of RNA and the activity is stimulated by poly(A)-binding protein PAB1. PAN deadenylation is followed by rapid degradation of the shortened mRNA tails by the CCR4-NOT complex. Deadenylated mRNAs are then degraded by two alternative mechanisms, namely exosome-mediated 3'-5' exonucleolytic degradation, or deadenylation-dependent mRNA decaping and subsequent 5'-3' exonucleolytic degradation by XRN1. May also be involved in post-transcriptional maturation of mRNA poly(A) tails. This Candida albicans (strain SC5314 / ATCC MYA-2876) (Yeast) protein is PAN2-PAN3 deadenylation complex catalytic subunit PAN2.